The following is a 651-amino-acid chain: Acetyl-coenzyme A synthetase (651 aa).

CoA-binding positions include 189 to 192 (RGGK), T311, and N335. Residues 387–389 (GEP), 411–416 (DTWWQT), D500, and R515 each bind ATP. S523 is a binding site for CoA. R526 lines the ATP pocket. The Mg(2+) site is built by V537, H539, and V542. Residue R584 coordinates CoA. N6-acetyllysine is present on K609.

It belongs to the ATP-dependent AMP-binding enzyme family. Mg(2+) serves as cofactor. In terms of processing, acetylated. Deacetylation by the SIR2-homolog deacetylase activates the enzyme.

It carries out the reaction acetate + ATP + CoA = acetyl-CoA + AMP + diphosphate. In terms of biological role, catalyzes the conversion of acetate into acetyl-CoA (AcCoA), an essential intermediate at the junction of anabolic and catabolic pathways. AcsA undergoes a two-step reaction. In the first half reaction, AcsA combines acetate with ATP to form acetyl-adenylate (AcAMP) intermediate. In the second half reaction, it can then transfer the acetyl group from AcAMP to the sulfhydryl group of CoA, forming the product AcCoA. The polypeptide is Acetyl-coenzyme A synthetase (Rhizobium leguminosarum bv. trifolii (strain WSM2304)).